A 61-amino-acid polypeptide reads, in one-letter code: Putative antitoxin APE_0472b.1 (61 aa).

The protein belongs to the UPF0165 family.

In terms of biological role, possibly the antitoxin component of a type II toxin-antitoxin (TA) system. This chain is Putative antitoxin APE_0472b.1, found in Aeropyrum pernix (strain ATCC 700893 / DSM 11879 / JCM 9820 / NBRC 100138 / K1).